The chain runs to 422 residues: Methylaspartate ammonia-lyase (422 aa).

(2S,3S)-3-methyl-L-aspartate is bound at residue Gln-175. 3 residues coordinate Mg(2+): Asp-239, Glu-276, and Asp-310. A (2S,3S)-3-methyl-L-aspartate-binding site is contributed by Gln-332. The active-site Proton acceptor is the Lys-334. 363-364 (TC) provides a ligand contact to (2S,3S)-3-methyl-L-aspartate.

The protein belongs to the methylaspartate ammonia-lyase family. Homodimer. Requires Mg(2+) as cofactor.

It carries out the reaction (2S,3S)-3-methyl-L-aspartate = mesaconate + NH4(+). It functions in the pathway amino-acid degradation; L-glutamate degradation via mesaconate pathway; acetate and pyruvate from L-glutamate: step 2/4. Involved in the methylaspartate cycle. Catalyzes the formation of the alpha,beta-unsaturated bond by the reversible anti elimination of ammonia from L-threo-beta-methylaspartate (L-threo-(2S,3S)-3-methylaspartate) to give mesaconate. The protein is Methylaspartate ammonia-lyase (mal) of Haloarcula marismortui (strain ATCC 43049 / DSM 3752 / JCM 8966 / VKM B-1809) (Halobacterium marismortui).